The chain runs to 446 residues: D(1A) dopamine receptor (446 aa).

Residues 1-23 are Extracellular-facing; sequence MRTLNTSAMDGTGLVVERDFSVR. N-linked (GlcNAc...) asparagine glycosylation is present at Asn5. A helical membrane pass occupies residues 24–49; the sequence is ILTACFLSLLILSTLLGNTLVCAAVI. Residues 50–60 are Cytoplasmic-facing; the sequence is RFRHLRSKVTN. A helical transmembrane segment spans residues 61 to 87; sequence FFVISLAVSDLLVAVLVMPWKAVAEIA. Topologically, residues 88 to 96 are extracellular; the sequence is GFWPFGSFC. An intrachain disulfide couples Cys96 to Cys186. The helical transmembrane segment at 97–119 threads the bilayer; sequence NIWVAFDIMCSTASILNLCVISV. Residues 120-138 are Cytoplasmic-facing; the sequence is DRYWAISSPFRYERKMTPK. Residues 139 to 163 form a helical membrane-spanning segment; it reads AAFILISVAWTLSVLISFIPVQLSW. The Extracellular segment spans residues 164–192; it reads HKAKPTSPSDGNATSLAETIDNCDSSLSR. The N-linked (GlcNAc...) asparagine glycan is linked to Asn175. Residues 193–218 traverse the membrane as a helical segment; that stretch reads TYAISSSVISFYIPVAIMIVTYTRIY. Topologically, residues 219 to 272 are cytoplasmic; sequence RIAQKQIRRIAALERAAVHAKNCQTTTGNGKPVECSQPESSFKMSFKRETKVLK. A helical membrane pass occupies residues 273 to 299; the sequence is TLSVIMGVFVCCWLPFFILNCILPFCG. Residues 300–312 lie on the Extracellular side of the membrane; the sequence is SGETQPFCIDSIT. A helical transmembrane segment spans residues 313–337; the sequence is FDVFVWFGWANSSLNPIIYAFNADF. Residues 338-446 lie on the Cytoplasmic side of the membrane; it reads RKAFSTLLGC…PITQNGQHPT (109 aa). S-palmitoyl cysteine attachment occurs at residues Cys347 and Cys351.

The protein belongs to the G-protein coupled receptor 1 family. Interacts with DNAJC14 via its C-terminus. Interacts with DRD2. Interacts with DORIP1.

It localises to the cell membrane. Its subcellular location is the endoplasmic reticulum membrane. The protein resides in the cell projection. It is found in the cilium membrane. The protein localises to the dendrite. It localises to the dendritic spine. Dopamine receptor whose activity is mediated by G proteins which activate adenylyl cyclase. This is D(1A) dopamine receptor (DRD1) from Macaca mulatta (Rhesus macaque).